Consider the following 196-residue polypeptide: Holliday junction branch migration complex subunit RuvA (196 aa).

The interval 1 to 62 is domain I; the sequence is MYEYINGLIT…ENEMTLYGFI (62 aa). The domain II stretch occupies residues 63 to 141; it reads DENEKYLFNK…DLALSAGMTV (79 aa). The flexible linker stretch occupies residues 142–146; it reads ETVPT. Residues 147–196 are domain III; it reads TDNQALADALAALESLGYSAKDVAKLQTVLANQKDTTDGYIRSALKFLVK.

Belongs to the RuvA family. Homotetramer. Forms an RuvA(8)-RuvB(12)-Holliday junction (HJ) complex. HJ DNA is sandwiched between 2 RuvA tetramers; dsDNA enters through RuvA and exits via RuvB. An RuvB hexamer assembles on each DNA strand where it exits the tetramer. Each RuvB hexamer is contacted by two RuvA subunits (via domain III) on 2 adjacent RuvB subunits; this complex drives branch migration. In the full resolvosome a probable DNA-RuvA(4)-RuvB(12)-RuvC(2) complex forms which resolves the HJ.

Its subcellular location is the cytoplasm. Functionally, the RuvA-RuvB-RuvC complex processes Holliday junction (HJ) DNA during genetic recombination and DNA repair, while the RuvA-RuvB complex plays an important role in the rescue of blocked DNA replication forks via replication fork reversal (RFR). RuvA specifically binds to HJ cruciform DNA, conferring on it an open structure. The RuvB hexamer acts as an ATP-dependent pump, pulling dsDNA into and through the RuvAB complex. HJ branch migration allows RuvC to scan DNA until it finds its consensus sequence, where it cleaves and resolves the cruciform DNA. The sequence is that of Holliday junction branch migration complex subunit RuvA from Leuconostoc citreum (strain KM20).